The primary structure comprises 56 residues: Large ribosomal subunit protein bL33 (56 aa).

This sequence belongs to the bacterial ribosomal protein bL33 family.

The chain is Large ribosomal subunit protein bL33 from Orientia tsutsugamushi (strain Ikeda) (Rickettsia tsutsugamushi).